The following is a 381-amino-acid chain: MSLNMFWFLPTHGDGHYLGTEEGSRPVDHGYLQQIAQAADRLGYTGVLIPTGRSCEDAWLVAASMIPVTQRLKFLVALRPSVTSPTVAARQAATLDRLSNGRALFNLVTGSDPQELAGDGVFLDHSERYEASAEFTQVWRRLLLGETVNFNGKHIHVRGAKLLFPPIQQPYPPLYFGGSSDVAQELAAEQVDLYLTWGEPPELVKEKIEHVRAKAAAHGRKIRFGIRLHVIVRETNDEAWQAAERLISHLDDETIAKAQAAFARTDSVGQQRMAALHNGKRDNLEISPNLWAGVGLVRGGAGTALVGDGPTVAARINEYAALGIDSFVLSGYPHLEEAYRVGELLFPHLDVAIPEIPQPQPLNPQGEAVANDFIPRKVAQS.

This sequence belongs to the SsuD family. Homotetramer.

The enzyme catalyses an alkanesulfonate + FMNH2 + O2 = an aldehyde + FMN + sulfite + H2O + 2 H(+). Its function is as follows. Catalyzes the desulfonation of aliphatic sulfonates. The chain is Alkanesulfonate monooxygenase from Escherichia coli O127:H6 (strain E2348/69 / EPEC).